The chain runs to 329 residues: Tyrosine recombinase XerC 1 (329 aa).

Positions 14–101 (APPHPQIGAY…AWRGWYQWLA (88 aa)) constitute a Core-binding (CB) domain. In terms of domain architecture, Tyr recombinase spans 123 to 320 (RLPKALSVEQ…DFQHLAKIYD (198 aa)). Catalysis depends on residues Arg-163, Lys-198, His-272, Arg-275, and His-298. Residue Tyr-307 is the O-(3'-phospho-DNA)-tyrosine intermediate of the active site.

Belongs to the 'phage' integrase family. XerC subfamily. Forms a cyclic heterotetrameric complex composed of two molecules of XerC and two molecules of XerD.

The protein localises to the cytoplasm. In terms of biological role, site-specific tyrosine recombinase, which acts by catalyzing the cutting and rejoining of the recombining DNA molecules. The XerC-XerD complex is essential to convert dimers of the bacterial chromosome into monomers to permit their segregation at cell division. It also contributes to the segregational stability of plasmids. The protein is Tyrosine recombinase XerC 1 (xerC1) of Ralstonia nicotianae (strain ATCC BAA-1114 / GMI1000) (Ralstonia solanacearum).